Consider the following 216-residue polypeptide: Pyridoxine/pyridoxamine 5'-phosphate oxidase (216 aa).

Residues 9–12 (RLSY) and arginine 67 contribute to the substrate site. Residues 62–67 (RIVLLR), 77–78 (YT), lysine 84, and glutamine 106 each bind FMN. Residues tyrosine 124, arginine 128, and serine 132 each coordinate substrate. FMN-binding positions include 142-143 (QS) and tryptophan 188. 194–196 (RMH) contributes to the substrate binding site. An FMN-binding site is contributed by arginine 198.

It belongs to the pyridoxamine 5'-phosphate oxidase family. As to quaternary structure, homodimer. FMN is required as a cofactor.

It carries out the reaction pyridoxamine 5'-phosphate + O2 + H2O = pyridoxal 5'-phosphate + H2O2 + NH4(+). The enzyme catalyses pyridoxine 5'-phosphate + O2 = pyridoxal 5'-phosphate + H2O2. The protein operates within cofactor metabolism; pyridoxal 5'-phosphate salvage; pyridoxal 5'-phosphate from pyridoxamine 5'-phosphate: step 1/1. It functions in the pathway cofactor metabolism; pyridoxal 5'-phosphate salvage; pyridoxal 5'-phosphate from pyridoxine 5'-phosphate: step 1/1. Catalyzes the oxidation of either pyridoxine 5'-phosphate (PNP) or pyridoxamine 5'-phosphate (PMP) into pyridoxal 5'-phosphate (PLP). This chain is Pyridoxine/pyridoxamine 5'-phosphate oxidase, found in Psychrobacter cryohalolentis (strain ATCC BAA-1226 / DSM 17306 / VKM B-2378 / K5).